The sequence spans 591 residues: Fanconi anemia group C protein homolog (591 aa).

As to quaternary structure, belongs to the multisubunit FA complex composed of FANCA, FANCB, FANCC, FANCE, FANCF, FANCG, FANCL/PHF9 and FANCM. This complex may also include HSP70. Interacts with ZBTB32. Upon IFNG induction, interacts with STAT1. Interacts with CDK1. Interacts with EIF2AK2. As to expression, ubiquitous.

The protein resides in the nucleus. The protein localises to the cytoplasm. Its function is as follows. DNA repair protein that may operate in a postreplication repair or a cell cycle checkpoint function. May be implicated in interstrand DNA cross-link repair and in the maintenance of normal chromosome stability. Upon IFNG induction, may facilitate STAT1 activation by recruiting STAT1 to IFNGR1. The chain is Fanconi anemia group C protein homolog (Fancc) from Mus musculus (Mouse).